Here is a 319-residue protein sequence, read N- to C-terminus: Oxaloacetate tautomerase fahd2, mitochondrial (319 aa).

The transit peptide at 1 to 31 (MLTQTRVALRVLKNAHLTLPKRNISQSPALS) directs the protein to the mitochondrion. Glu-164, Glu-166, and Asp-195 together coordinate Mg(2+).

The protein belongs to the FAH family. Mg(2+) serves as cofactor. Requires Mn(2+) as cofactor.

Its subcellular location is the mitochondrion. It catalyses the reaction oxaloacetate = enol-oxaloacetate. Tautomerase that converts enol-oxaloacetate, a strong inhibitor of succinate dehydrogenase, to the physiological keto form of oxaloacetate. It is thereby required to maximize aerobic respiration efficiency by preventing succinate dehydrogenase inhibition. The protein is Oxaloacetate tautomerase fahd2, mitochondrial (fahd2) of Xenopus laevis (African clawed frog).